Here is a 355-residue protein sequence, read N- to C-terminus: Peptide chain release factor 1 (355 aa).

The residue at position 232 (Gln232) is an N5-methylglutamine. Positions 282–309 (EQNASISAERKSQVGSGDRSERIRTYNY) are disordered. The segment covering 289-305 (AERKSQVGSGDRSERIR) has biased composition (basic and acidic residues).

It belongs to the prokaryotic/mitochondrial release factor family. Post-translationally, methylated by PrmC. Methylation increases the termination efficiency of RF1.

It localises to the cytoplasm. Functionally, peptide chain release factor 1 directs the termination of translation in response to the peptide chain termination codons UAG and UAA. In Desulfatibacillum aliphaticivorans, this protein is Peptide chain release factor 1.